A 318-amino-acid polypeptide reads, in one-letter code: Putative S-adenosyl-L-methionine-dependent methyltransferase MMAR_1595 (318 aa).

S-adenosyl-L-methionine contacts are provided by residues E132 and 161-162 (DL).

Belongs to the UPF0677 family.

In terms of biological role, exhibits S-adenosyl-L-methionine-dependent methyltransferase activity. This Mycobacterium marinum (strain ATCC BAA-535 / M) protein is Putative S-adenosyl-L-methionine-dependent methyltransferase MMAR_1595.